The following is a 101-amino-acid chain: Small ribosomal subunit protein uS10 (101 aa).

The protein belongs to the universal ribosomal protein uS10 family. Part of the 30S ribosomal subunit.

Involved in the binding of tRNA to the ribosomes. In Corynebacterium urealyticum (strain ATCC 43042 / DSM 7109), this protein is Small ribosomal subunit protein uS10.